The sequence spans 1007 residues: Protocadherin alpha-C2 (1007 aa).

The N-terminal stretch at 1 to 42 (MEQAGTRPAATEHPRLRRPMPWLLLLPLLLLLLLLLPGPAAS) is a signal peptide. Cadherin domains lie at 43–148 (QLRY…SPRF), 149–257 (PRPN…SPAF), 258–365 (DQST…APEV), 374–469 (VPEN…PPSF), and 470–579 (LEDS…APHI). The Extracellular segment spans residues 43 to 708 (QLRYSVPEEQ…RTYSEITLYL (666 aa)). 2 N-linked (GlcNAc...) asparagine glycosylation sites follow: asparagine 280 and asparagine 436. N-linked (GlcNAc...) asparagine glycosylation is found at asparagine 586 and asparagine 657. The 98-residue stretch at 594-691 (VPRTAPAGYL…DRVSKILPDT (98 aa)) folds into the Cadherin 6 domain. A helical transmembrane segment spans residues 709–729 (IIALSTVSFIFLLTIIILSII). The Cytoplasmic portion of the chain corresponds to 730 to 1007 (KCYRYTAYGT…GNSTTDNSDQ (278 aa)). PXXP repeat units follow at residues 856-859 (PRQP), 889-892 (PGGP), 930-933 (PGNP), and 948-951 (PGSP). The 4 X 4 AA repeats of P-X-X-P stretch occupies residues 856 to 951 (PRQPNPDWRY…PDKFIIPGSP (96 aa)). Positions 885–1007 (LRAGPGGPDQ…GNSTTDNSDQ (123 aa)) are disordered. A compositionally biased stretch (basic and acidic residues) spans 966–980 (DKSDFITFGKKEETK).

The protein localises to the cell membrane. Its function is as follows. Potential calcium-dependent cell-adhesion protein. May be involved in the establishment and maintenance of specific neuronal connections in the brain. The sequence is that of Protocadherin alpha-C2 (PCDHAC2) from Homo sapiens (Human).